We begin with the raw amino-acid sequence, 255 residues long: 4-hydroxy-tetrahydrodipicolinate reductase (255 aa).

Residues 9-14, 89-91, and 115-118 contribute to the NAD(+) site; these read GYRGKM, GTT, and APNF. Histidine 145 (proton donor/acceptor) is an active-site residue. A (S)-2,3,4,5-tetrahydrodipicolinate-binding site is contributed by histidine 146. Lysine 149 functions as the Proton donor in the catalytic mechanism. 155 to 156 is a binding site for (S)-2,3,4,5-tetrahydrodipicolinate; the sequence is GT.

This sequence belongs to the DapB family.

Its subcellular location is the cytoplasm. It catalyses the reaction (S)-2,3,4,5-tetrahydrodipicolinate + NAD(+) + H2O = (2S,4S)-4-hydroxy-2,3,4,5-tetrahydrodipicolinate + NADH + H(+). The catalysed reaction is (S)-2,3,4,5-tetrahydrodipicolinate + NADP(+) + H2O = (2S,4S)-4-hydroxy-2,3,4,5-tetrahydrodipicolinate + NADPH + H(+). The protein operates within amino-acid biosynthesis; L-lysine biosynthesis via DAP pathway; (S)-tetrahydrodipicolinate from L-aspartate: step 4/4. Catalyzes the conversion of 4-hydroxy-tetrahydrodipicolinate (HTPA) to tetrahydrodipicolinate. This chain is 4-hydroxy-tetrahydrodipicolinate reductase, found in Streptococcus uberis (strain ATCC BAA-854 / 0140J).